The chain runs to 299 residues: Ankyrin repeat domain-containing protein 54 (299 aa).

Positions 1 to 27 are disordered; it reads MAATGGGADDESRSGRSSSDGECAVAP. The residue at position 2 (Ala2) is an N-acetylalanine. Ser62 is modified (phosphoserine). The Nuclear localization signal (NLS) motif lies at 98-116; sequence RRLGPTGKEVHALKRLRDS. ANK repeat units follow at residues 108-137, 141-170, 174-203, and 207-239; these read HALK…DPCA, KGRT…DPNQ, LGNT…RVDA, and AGRT…EVKQ. The LYN-binding stretch occupies residues 140–240; sequence DKGRTALHFA…EAVRLEVKQI (101 aa). The Nuclear export signal (NES) motif lies at 282 to 292; sequence LLASFTSLSLQ.

Interacts (via ankyrin repeat region) with LYN (via SH3-domain) in an activation-independent status of LYN. Forms a multiprotein complex with LYN and HCLS1. Interacts with TSN2, VAV1, DBNL and LASP1. In terms of tissue distribution, expressed in a variety of hemopoietic cell lines and tissue with high levels in testis. Highly expressed in ciliated cells.

It is found in the nucleus. It localises to the cytoplasm. The protein resides in the midbody. Plays an important role in regulating intracellular signaling events associated with erythroid terminal differentiation. The polypeptide is Ankyrin repeat domain-containing protein 54 (Ankrd54) (Mus musculus (Mouse)).